The following is a 96-amino-acid chain: Co-chaperonin GroES (96 aa).

It belongs to the GroES chaperonin family. As to quaternary structure, heptamer of 7 subunits arranged in a ring. Interacts with the chaperonin GroEL.

It localises to the cytoplasm. Functionally, together with the chaperonin GroEL, plays an essential role in assisting protein folding. The GroEL-GroES system forms a nano-cage that allows encapsulation of the non-native substrate proteins and provides a physical environment optimized to promote and accelerate protein folding. GroES binds to the apical surface of the GroEL ring, thereby capping the opening of the GroEL channel. The sequence is that of Co-chaperonin GroES from Polynucleobacter asymbioticus (strain DSM 18221 / CIP 109841 / QLW-P1DMWA-1) (Polynucleobacter necessarius subsp. asymbioticus).